The chain runs to 220 residues: ATP synthase F(0) complex subunit a (220 aa).

6 helical membrane-spanning segments follow: residues 12–32 (PTLLGVPLIAVAMMFPWTLLP), 69–89 (WAMILMSLNLLGLLPYTFTPT), 91–111 (QLSLNMGLAIPFWLATVLLGL), 130–150 (LLIPILIIIETISLLIRPFAL), 158–178 (LTAGHLLMQLIATAAFVLLPM), and 183–203 (ALLTTLVLFLLTLLEIAVAMI).

Belongs to the ATPase A chain family. Component of the ATP synthase complex composed at least of ATP5F1A/subunit alpha, ATP5F1B/subunit beta, ATP5MC1/subunit c (homooctomer), MT-ATP6/subunit a, MT-ATP8/subunit 8, ATP5ME/subunit e, ATP5MF/subunit f, ATP5MG/subunit g, ATP5MK/subunit k, ATP5MJ/subunit j, ATP5F1C/subunit gamma, ATP5F1D/subunit delta, ATP5F1E/subunit epsilon, ATP5PF/subunit F6, ATP5PB/subunit b, ATP5PD/subunit d, ATP5PO/subunit OSCP. ATP synthase complex consists of a soluble F(1) head domain (subunits alpha(3) and beta(3)) - the catalytic core - and a membrane F(0) domain - the membrane proton channel (subunits c, a, 8, e, f, g, k and j). These two domains are linked by a central stalk (subunits gamma, delta, and epsilon) rotating inside the F1 region and a stationary peripheral stalk (subunits F6, b, d, and OSCP). Interacts with DNAJC30; interaction is direct.

Its subcellular location is the mitochondrion inner membrane. The catalysed reaction is H(+)(in) = H(+)(out). In terms of biological role, subunit a, of the mitochondrial membrane ATP synthase complex (F(1)F(0) ATP synthase or Complex V) that produces ATP from ADP in the presence of a proton gradient across the membrane which is generated by electron transport complexes of the respiratory chain. ATP synthase complex consist of a soluble F(1) head domain - the catalytic core - and a membrane F(1) domain - the membrane proton channel. These two domains are linked by a central stalk rotating inside the F(1) region and a stationary peripheral stalk. During catalysis, ATP synthesis in the catalytic domain of F(1) is coupled via a rotary mechanism of the central stalk subunits to proton translocation. With the subunit c (ATP5MC1), forms the proton-conducting channel in the F(0) domain, that contains two crucial half-channels (inlet and outlet) that facilitate proton movement from the mitochondrial intermembrane space (IMS) into the matrix. Protons are taken up via the inlet half-channel and released through the outlet half-channel, following a Grotthuss mechanism. This Latimeria chalumnae (Coelacanth) protein is ATP synthase F(0) complex subunit a.